An 86-amino-acid chain; its full sequence is Cell division topological specificity factor (86 aa).

This sequence belongs to the MinE family.

In terms of biological role, prevents the cell division inhibition by proteins MinC and MinD at internal division sites while permitting inhibition at polar sites. This ensures cell division at the proper site by restricting the formation of a division septum at the midpoint of the long axis of the cell. In Rhizobium etli (strain ATCC 51251 / DSM 11541 / JCM 21823 / NBRC 15573 / CFN 42), this protein is Cell division topological specificity factor.